A 277-amino-acid chain; its full sequence is Glutamate racemase (277 aa).

Residues 25–26 and 57–58 each bind substrate; these read DS and YG. Catalysis depends on Cys-89, which acts as the Proton donor/acceptor. Residue 90–91 coordinates substrate; it reads NT. Cys-204 serves as the catalytic Proton donor/acceptor. 205 to 206 contacts substrate; it reads TH.

It belongs to the aspartate/glutamate racemases family.

It carries out the reaction L-glutamate = D-glutamate. The protein operates within cell wall biogenesis; peptidoglycan biosynthesis. Functionally, provides the (R)-glutamate required for cell wall biosynthesis. This Brucella ovis (strain ATCC 25840 / 63/290 / NCTC 10512) protein is Glutamate racemase.